Consider the following 351-residue polypeptide: Anthranilate phosphoribosyltransferase (351 aa).

Residues glycine 84, 87 to 88 (GD), 95 to 98 (NISS), 113 to 121 (KHGNRGASS), and alanine 125 contribute to the 5-phospho-alpha-D-ribose 1-diphosphate site. An anthranilate-binding site is contributed by glycine 84. Residue serine 97 coordinates Mg(2+). An anthranilate-binding site is contributed by asparagine 116. Position 171 (arginine 171) interacts with anthranilate. Aspartate 229 and lysine 230 together coordinate Mg(2+).

This sequence belongs to the anthranilate phosphoribosyltransferase family. Homodimer. Requires Mg(2+) as cofactor.

The catalysed reaction is N-(5-phospho-beta-D-ribosyl)anthranilate + diphosphate = 5-phospho-alpha-D-ribose 1-diphosphate + anthranilate. Its pathway is amino-acid biosynthesis; L-tryptophan biosynthesis; L-tryptophan from chorismate: step 2/5. Its function is as follows. Catalyzes the transfer of the phosphoribosyl group of 5-phosphorylribose-1-pyrophosphate (PRPP) to anthranilate to yield N-(5'-phosphoribosyl)-anthranilate (PRA). This Clavibacter michiganensis subsp. michiganensis (strain NCPPB 382) protein is Anthranilate phosphoribosyltransferase.